Consider the following 365-residue polypeptide: Protein AC54 (365 aa).

In terms of assembly, interacts with C42 and VP80. Interacts with protein 38K.

The protein resides in the virion. Its function is as follows. Structural protein that participates in nucleocapsid assembly. Plays an essential role in the proper localization of the major capsid protein VP39, and the minor capsid protein 38K into the capsid assembly site. This chain is Protein AC54 (AC54), found in Lepidoptera (butterflies and moths).